The sequence spans 380 residues: Cytochrome b (380 aa).

Helical transmembrane passes span 33-53 (FGSL…FLAM), 77-98 (WLIR…YMHI), 113-133 (WNIG…GYVL), and 178-198 (FFAF…LHLL). Heme b is bound by residues histidine 83 and histidine 97. Heme b contacts are provided by histidine 182 and histidine 196. Histidine 201 is a binding site for a ubiquinone. The next 4 helical transmembrane spans lie at 226–246 (YKDL…ALFA), 288–308 (LGGV…PFLH), 320–340 (LTQM…WIGG), and 347–367 (FIII…VLFP).

It belongs to the cytochrome b family. The cytochrome bc1 complex contains 3 respiratory subunits (MT-CYB, CYC1 and UQCRFS1), 2 core proteins (UQCRC1 and UQCRC2) and probably 6 low-molecular weight proteins. It depends on heme b as a cofactor.

The protein localises to the mitochondrion inner membrane. Component of the ubiquinol-cytochrome c reductase complex (complex III or cytochrome b-c1 complex) that is part of the mitochondrial respiratory chain. The b-c1 complex mediates electron transfer from ubiquinol to cytochrome c. Contributes to the generation of a proton gradient across the mitochondrial membrane that is then used for ATP synthesis. This Gadus morhua (Atlantic cod) protein is Cytochrome b (mt-cyb).